A 210-amino-acid polypeptide reads, in one-letter code: Probable GTP-binding protein EngB (210 aa).

The EngB-type G domain maps to 30–204; the sequence is QGYEVAFAGR…YRVLADWMEL (175 aa). GTP-binding positions include 38 to 45, 64 to 68, 82 to 85, 149 to 152, and 182 to 185; these read GRSNAGKS, GRTQL, DLPG, TKAD, and LFSA. Mg(2+) contacts are provided by Ser45 and Thr66.

It belongs to the TRAFAC class TrmE-Era-EngA-EngB-Septin-like GTPase superfamily. EngB GTPase family. Mg(2+) is required as a cofactor.

Functionally, necessary for normal cell division and for the maintenance of normal septation. The sequence is that of Probable GTP-binding protein EngB from Pseudomonas entomophila (strain L48).